The sequence spans 421 residues: UDP-N-acetylglucosamine 1-carboxyvinyltransferase (421 aa).

Phosphoenolpyruvate is bound at residue 22-23; that stretch reads KN. Position 91 (arginine 91) interacts with UDP-N-acetyl-alpha-D-glucosamine. The Proton donor role is filled by cysteine 115. At cysteine 115 the chain carries 2-(S-cysteinyl)pyruvic acid O-phosphothioketal. Residues 120–124, aspartate 306, and isoleucine 328 each bind UDP-N-acetyl-alpha-D-glucosamine; that span reads RPIDL.

It belongs to the EPSP synthase family. MurA subfamily.

Its subcellular location is the cytoplasm. It carries out the reaction phosphoenolpyruvate + UDP-N-acetyl-alpha-D-glucosamine = UDP-N-acetyl-3-O-(1-carboxyvinyl)-alpha-D-glucosamine + phosphate. Its pathway is cell wall biogenesis; peptidoglycan biosynthesis. In terms of biological role, cell wall formation. Adds enolpyruvyl to UDP-N-acetylglucosamine. This chain is UDP-N-acetylglucosamine 1-carboxyvinyltransferase, found in Methylacidiphilum infernorum (isolate V4) (Methylokorus infernorum (strain V4)).